A 688-amino-acid chain; its full sequence is Glycine--tRNA ligase beta subunit (688 aa).

This sequence belongs to the class-II aminoacyl-tRNA synthetase family. As to quaternary structure, tetramer of two alpha and two beta subunits.

It localises to the cytoplasm. The enzyme catalyses tRNA(Gly) + glycine + ATP = glycyl-tRNA(Gly) + AMP + diphosphate. This is Glycine--tRNA ligase beta subunit from Syntrophotalea carbinolica (strain DSM 2380 / NBRC 103641 / GraBd1) (Pelobacter carbinolicus).